The primary structure comprises 203 residues: N-(5'-phosphoribosyl)anthranilate isomerase (203 aa).

It belongs to the TrpF family.

The enzyme catalyses N-(5-phospho-beta-D-ribosyl)anthranilate = 1-(2-carboxyphenylamino)-1-deoxy-D-ribulose 5-phosphate. It participates in amino-acid biosynthesis; L-tryptophan biosynthesis; L-tryptophan from chorismate: step 3/5. This is N-(5'-phosphoribosyl)anthranilate isomerase from Caldanaerobacter subterraneus subsp. tengcongensis (strain DSM 15242 / JCM 11007 / NBRC 100824 / MB4) (Thermoanaerobacter tengcongensis).